The following is a 459-amino-acid chain: Arginine biosynthesis bifunctional protein ArgJ, mitochondrial (459 aa).

Substrate is bound by residues Thr187, Lys216, Thr227, Glu314, Asn454, and Thr459. The active-site Nucleophile is the Thr227.

This sequence belongs to the ArgJ family. As to quaternary structure, heterodimer of an alpha and a beta chain. Post-translationally, the alpha and beta chains are autoproteolytically processed from a single precursor protein within the mitochondrion.

The protein localises to the mitochondrion matrix. The catalysed reaction is N(2)-acetyl-L-ornithine + L-glutamate = N-acetyl-L-glutamate + L-ornithine. It carries out the reaction L-glutamate + acetyl-CoA = N-acetyl-L-glutamate + CoA + H(+). It functions in the pathway amino-acid biosynthesis; L-arginine biosynthesis; L-ornithine and N-acetyl-L-glutamate from L-glutamate and N(2)-acetyl-L-ornithine (cyclic): step 1/1. Its pathway is amino-acid biosynthesis; L-arginine biosynthesis; N(2)-acetyl-L-ornithine from L-glutamate: step 1/4. Catalyzes two activities which are involved in the cyclic version of arginine biosynthesis: the synthesis of acetylglutamate from glutamate and acetyl-CoA, and of ornithine by transacetylation between acetylornithine and glutamate. The protein is Arginine biosynthesis bifunctional protein ArgJ, mitochondrial of Uncinocarpus reesii (strain UAMH 1704).